The primary structure comprises 527 residues: Homeobox protein NOBOX (527 aa).

4 disordered regions span residues 1–126, 194–245, 271–306, and 488–527; these read MEPT…DLKK, VEKL…DVFP, VTPP…RDVP, and ETGS…GAKE. The segment at residues 136 to 195 is a DNA-binding region (homeobox); the sequence is RKKTRTLYRSDQLEELERIFQEDHYPDSDKRHEISQMVGVTPQRIMVWFQNRRAKWRKVE. Over residues 194–203 the composition is skewed to basic and acidic residues; that stretch reads VEKLNEKETK. Over residues 488-506 the composition is skewed to polar residues; sequence ETGSSLSKMSDEQTSSSLE. A compositionally biased stretch (basic and acidic residues) spans 511–527; sequence EEVRDKNKNSHAAGAKE.

In terms of tissue distribution, specifically expressed in ovaries and testes. In ovaries, expressed in oocytes from primordial through antral follicles but not in granulosa cells, theca cells and corpora lutea.

It is found in the nucleus. Functionally, transcription factor which plays an essential role in postnatal follicle development. Binds preferentially to the DNA sequences 5'-TAATTG-3', 5'-TAGTTG-3' and 5'-TAATTA-3'. Directly regulates the transcription of POU5F1 and GDF9 during early folliculogenesis. The polypeptide is Homeobox protein NOBOX (Nobox) (Mus musculus (Mouse)).